The sequence spans 213 residues: Na(+)-translocating NADH-quinone reductase subunit D (213 aa).

The next 6 helical transmembrane spans lie at 22-42 (LIAI…TTAL), 43-63 (TMGF…SLLR), 77-97 (IIIS…FFTI), 101-121 (LSVF…AESM), 131-151 (FLDG…ISII), and 183-203 (LGLM…IWIV).

It belongs to the NqrDE/RnfAE family. As to quaternary structure, composed of six subunits; NqrA, NqrB, NqrC, NqrD, NqrE and NqrF.

The protein localises to the cell inner membrane. It carries out the reaction a ubiquinone + n Na(+)(in) + NADH + H(+) = a ubiquinol + n Na(+)(out) + NAD(+). In terms of biological role, NQR complex catalyzes the reduction of ubiquinone-1 to ubiquinol by two successive reactions, coupled with the transport of Na(+) ions from the cytoplasm to the periplasm. NqrA to NqrE are probably involved in the second step, the conversion of ubisemiquinone to ubiquinol. The polypeptide is Na(+)-translocating NADH-quinone reductase subunit D (Chlamydia trachomatis serovar L2 (strain ATCC VR-902B / DSM 19102 / 434/Bu)).